Reading from the N-terminus, the 1905-residue chain is Low-density lipoprotein receptor-related protein 4 (1905 aa).

The first 20 residues, 1–20 (MRRWWGALLLGALLCAHGTA), serve as a signal peptide directing secretion. Residues 21 to 1723 (SNLECACGRS…VPAAPGEGLH (1703 aa)) are Extracellular-facing. LDL-receptor class A domains follow at residues 26–67 (ACGR…DGCT), 70–106 (TCSP…QDCP), 109–144 (ECEE…EQCD), 147–183 (KCSD…ESCP), 190–226 (PCNL…SDCS), 230–266 (PCRS…RNCT), 269–305 (MCTA…ENCE), and 311–350 (QCAS…QNCR). 30 disulfides stabilise this stretch: cysteine 27–cysteine 44, cysteine 34–cysteine 57, cysteine 51–cysteine 66, cysteine 71–cysteine 83, cysteine 78–cysteine 96, cysteine 90–cysteine 105, cysteine 110–cysteine 122, cysteine 117–cysteine 135, cysteine 129–cysteine 143, cysteine 148–cysteine 160, cysteine 155–cysteine 173, cysteine 167–cysteine 182, cysteine 191–cysteine 203, cysteine 198–cysteine 216, cysteine 210–cysteine 225, cysteine 231–cysteine 243, cysteine 238–cysteine 256, cysteine 250–cysteine 265, cysteine 270–cysteine 282, cysteine 277–cysteine 295, cysteine 289–cysteine 304, cysteine 312–cysteine 324, cysteine 319–cysteine 337, cysteine 331–cysteine 349, cysteine 358–cysteine 369, cysteine 365–cysteine 378, cysteine 380–cysteine 393, cysteine 399–cysteine 409, cysteine 405–cysteine 418, and cysteine 420–cysteine 433. Asparagine 264 carries an N-linked (GlcNAc...) asparagine glycan. Positions 354–394 (GEENCNVNNGGCAQKCQMIRGAVQCTCHTGYRLTEDGRTCQ) constitute an EGF-like 1; atypical domain. Residues 395–434 (DVNECAEEGYCSQGCTNSEGAFQCWCEAGYELRPDRRSCK) enclose the EGF-like 2; calcium-binding domain. 5 LDL-receptor class B repeats span residues 480 to 522 (ELVF…DWVH), 523 to 565 (DKLY…HPME), 566 to 609 (GTIY…DYAG), 610 to 652 (RRMY…FEDS), and 653 to 693 (LYWT…LHPQ). The N-linked (GlcNAc...) asparagine glycan is linked to asparagine 498. The 40-residue stretch at 698-737 (GKNRCGDNNGGCTHLCLPSGQNYTCACPTGFRKINSHACA) folds into the EGF-like 3 domain. Intrachain disulfides connect cysteine 702–cysteine 713, cysteine 709–cysteine 722, and cysteine 724–cysteine 736. A glycan (N-linked (GlcNAc...) asparagine) is linked at asparagine 719. LDL-receptor class B repeat units lie at residues 785-827 (DHVY…DWVT), 828-870 (NKLY…EPMG), 871-914 (GYMY…DYGS), 915-956 (QRLY…LYGQ), and 957-998 (RIYW…FHRQ). Asparagine 901 carries N-linked (GlcNAc...) asparagine glycosylation. Asparagine 1077 is a glycosylation site (N-linked (GlcNAc...) asparagine). LDL-receptor class B repeat units follow at residues 1093 to 1135 (GKVY…DAIG), 1136 to 1178 (RKVY…YHEM), 1179 to 1222 (GFMY…DKTS), 1223 to 1263 (SQLL…LLDS), 1264 to 1306 (YIYW…DRAQ), 1397 to 1439 (GKVY…DWVA), 1440 to 1482 (RNLY…FPRK), 1483 to 1526 (GYLF…DYDT), 1527 to 1568 (RRIY…QDRW), and 1569 to 1610 (IYWT…SPQR). N-linked (GlcNAc...) asparagine glycosylation is found at asparagine 1415 and asparagine 1467. The tract at residues 1659–1696 (PRATSLNEKSPVLPNTLPTTLHSSTTRTRTSPEGAEGR) is disordered. The segment covering 1671–1690 (LPNTLPTTLHSSTTRTRTSP) has biased composition (low complexity). Residues 1724–1746 (VSYAVGGLLSVLLILLVTAALML) form a helical membrane-spanning segment. Residues 1747–1905 (YRHRKSKFTD…ERKLSSESQV (159 aa)) are Cytoplasmic-facing. Positions 1853–1905 (SSGSLDDTETEQLLQEEQSECSSVHTATTPERRGSLPDTGWKHERKLSSESQV) are disordered. A compositionally biased stretch (polar residues) spans 1872 to 1881 (ECSSVHTATT). The span at 1882–1905 (PERRGSLPDTGWKHERKLSSESQV) shows a compositional bias: basic and acidic residues.

This sequence belongs to the LDLR family. As to quaternary structure, homooligomer. Interacts with MUSK; the heterodimer forms an AGRIN receptor complex that binds AGRIN resulting in activation of MUSK. Interacts (via the extracellular domain) with SOST; the interaction facilitates the inhibition of Wnt signaling. Interacts with MESD; the interaction promotes glycosylation of LRP4 and its cell-surface expression. N-glycosylation is required for cell surface location. Expressed in different regions of the brain, mainly in the olfactory bulb, at lower level in the cerebral cortex and hippocampus.

The protein resides in the cell membrane. Mediates SOST-dependent inhibition of bone formation. Functions as a specific facilitator of SOST-mediated inhibition of Wnt signaling. Plays a key role in the formation and the maintenance of the neuromuscular junction (NMJ), the synapse between motor neuron and skeletal muscle. Directly binds AGRIN and recruits it to the MUSK signaling complex. Mediates the AGRIN-induced phosphorylation of MUSK, the kinase of the complex. The activation of MUSK in myotubes induces the formation of NMJ by regulating different processes including the transcription of specific genes and the clustering of AChR in the postsynaptic membrane. Alternatively, may be involved in the negative regulation of the canonical Wnt signaling pathway, being able to antagonize the LRP6-mediated activation of this pathway. More generally, has been proposed to function as a cell surface endocytic receptor binding and internalizing extracellular ligands for degradation by lysosomes. Plays an essential role in the process of digit differentiation. This Rattus norvegicus (Rat) protein is Low-density lipoprotein receptor-related protein 4 (Lrp4).